Consider the following 408-residue polypeptide: Formate-dependent phosphoribosylglycinamide formyltransferase (408 aa).

N(1)-(5-phospho-beta-D-ribosyl)glycinamide is bound by residues 25–26 (EL) and Glu-85. ATP is bound by residues Arg-118, Lys-159, 164–169 (SSGKGQ), 199–202 (EAFV), and Glu-207. Positions 123–318 (KLAAEELGLP…EFELHAKAIL (196 aa)) constitute an ATP-grasp domain. Mg(2+) is bound by residues Glu-277 and Glu-289. Residues Asp-296, Lys-365, and 372-373 (RR) each bind N(1)-(5-phospho-beta-D-ribosyl)glycinamide.

The protein belongs to the PurK/PurT family. Homodimer.

The catalysed reaction is N(1)-(5-phospho-beta-D-ribosyl)glycinamide + formate + ATP = N(2)-formyl-N(1)-(5-phospho-beta-D-ribosyl)glycinamide + ADP + phosphate + H(+). The protein operates within purine metabolism; IMP biosynthesis via de novo pathway; N(2)-formyl-N(1)-(5-phospho-D-ribosyl)glycinamide from N(1)-(5-phospho-D-ribosyl)glycinamide (formate route): step 1/1. Its function is as follows. Involved in the de novo purine biosynthesis. Catalyzes the transfer of formate to 5-phospho-ribosyl-glycinamide (GAR), producing 5-phospho-ribosyl-N-formylglycinamide (FGAR). Formate is provided by PurU via hydrolysis of 10-formyl-tetrahydrofolate. The protein is Formate-dependent phosphoribosylglycinamide formyltransferase of Corynebacterium glutamicum (strain R).